A 782-amino-acid chain; its full sequence is uncharacterized protein (782 aa).

2 disordered regions span residues 1–25 (MFSP…STTS) and 175–195 (RPRT…EDLR). The segment covering 13-25 (ESESVSNCESTTS) has biased composition (low complexity). A compositionally biased stretch (basic and acidic residues) spans 183–195 (RAGDASMSREDLR). 4 coiled-coil regions span residues 223–331 (RENR…STLN), 348–398 (LSQF…VSTL), 428–601 (NRIN…QLLN), and 699–743 (TIET…IIAK). The tract at residues 748–782 (NIPKTEKSSPMKKVPPIENFRAKSQTSITGLSPVL) is disordered. Positions 769-782 (AKSQTSITGLSPVL) are enriched in polar residues.

This is an uncharacterized protein from Caenorhabditis elegans.